We begin with the raw amino-acid sequence, 281 residues long: Small ribosomal subunit protein uS2 (281 aa).

The interval L225–E281 is disordered. Over residues R245 to S256 the composition is skewed to basic residues. Low complexity predominate over residues E262 to A272.

Belongs to the universal ribosomal protein uS2 family.

The protein is Small ribosomal subunit protein uS2 of Porphyromonas gingivalis (strain ATCC 33277 / DSM 20709 / CIP 103683 / JCM 12257 / NCTC 11834 / 2561).